A 352-amino-acid polypeptide reads, in one-letter code: Secretion system apparatus protein SsaU (352 aa).

4 helical membrane-spanning segments follow: residues 34–54, 89–109, 144–164, and 176–196; these read LIAL…ILIE, LGAG…GVVI, LKVI…ASTF, and VLVV…FYIV.

The protein belongs to the type III secretion exporter family.

Its subcellular location is the cell membrane. Functionally, part of a type III secretion system. The sequence is that of Secretion system apparatus protein SsaU (ssaU) from Salmonella typhimurium (strain LT2 / SGSC1412 / ATCC 700720).